Here is a 722-residue protein sequence, read N- to C-terminus: Pre-B-cell leukemia transcription factor-interacting protein 1 (722 aa).

Over residues 1–10 (MASCPDSDNS) the composition is skewed to polar residues. The disordered stretch occupies residues 1 to 180 (MASCPDSDNS…TAAVDGEDQA (180 aa)). Residues 88–97 (DDGHGTKRPG) show a composition bias toward basic and acidic residues. Residues Ser133, Ser144, Ser145, and Ser146 each carry the phosphoserine modification. A Phosphothreonine modification is found at Thr150. Ser166 carries the post-translational modification Phosphoserine. 2 coiled-coil regions span residues 266 to 346 (LLLD…RGVD) and 373 to 401 (DTSL…WQLL). Residues 442–453 (QGINTGRSSNDS) show a composition bias toward polar residues. 2 disordered regions span residues 442-562 (QGIN…SPDS) and 691-722 (RRSK…YHQG). 2 stretches are compositionally biased toward basic and acidic residues: residues 465-536 (HPRE…DPKV) and 546-559 (SGER…KDNS). The short motif at 482-502 (QKAEHWKLKKEESGQDRKKSW) is the Nuclear localization signal element. Phosphoserine is present on Ser559. Residues 686-711 (DKALKRRSKKKEKQPWNHRAVGPREE) carry the Nuclear localization signal motif.

Interacts with ESR1, PBX1, PBX2 and PBX3. Interacts with TEX11.

The protein resides in the cytoplasm. Its subcellular location is the cytoskeleton. It localises to the nucleus. Regulator of pre-B-cell leukemia transcription factors (BPXs) function. Inhibits the binding of PBX1-HOX complex to DNA and blocks the transcriptional activity of E2A-PBX1. Tethers estrogen receptor-alpha (ESR1) to microtubules and allows them to influence estrogen receptors-alpha signaling. This Rattus norvegicus (Rat) protein is Pre-B-cell leukemia transcription factor-interacting protein 1 (Pbxip1).